The chain runs to 242 residues: Small ribosomal subunit protein uS2 (242 aa).

The protein belongs to the universal ribosomal protein uS2 family.

In Shouchella clausii (strain KSM-K16) (Alkalihalobacillus clausii), this protein is Small ribosomal subunit protein uS2.